A 642-amino-acid chain; its full sequence is Tigger transposable element derived 5 (642 aa).

Positions 1 to 54 (MYPASPSAGPALHPVPHRARLPRPRCLAEPPRSPAPGPGSTARPPPPAPGPRPR) are disordered. The span at 31–52 (PRSPAPGPGSTARPPPPAPGPR) shows a compositional bias: pro residues. Residues 56-107 (AVKMTFRKAYSIKDKLQAIERVKGGERQASVCRDFGVPGGTLRGWLKDEPKL) form the HTH psq-type domain. DNA-binding regions (H-T-H motif) lie at residues 83 to 103 (QASVCRDFGVPGGTLRGWLKD) and 154 to 187 (PVIQAQAEAFARQIYGPECTFKASHGWFWRWQKR). The region spanning 121–194 (QRKKMRLANE…QKRHGISSQR (74 aa)) is the HTH CENPB-type domain. Low complexity predominate over residues 198–208 (EAEPPVAGPAP). The interval 198–230 (EAEPPVAGPAPVKEEPAQPSSAGLLLDGTPATL) is disordered. The DDE-1 domain occupies 239–364 (DEQIYNANVT…CLQQKAVLLV (126 aa)). The disordered stretch occupies residues 543 to 583 (GLPEGCGEEVAPAAPPSPASLPSSIGAGEEEEEEATEQGGV).

Belongs to the tigger transposable element derived protein family.

It is found in the nucleus. In Rattus norvegicus (Rat), this protein is Tigger transposable element derived 5 (Tigd5).